The chain runs to 395 residues: Beta-1,4-galactosyltransferase 3 (395 aa).

Residues M1–C10 lie on the Cytoplasmic side of the membrane. The chain crosses the membrane as a helical; Signal-anchor for type II membrane protein span at residues T11–F31. Over R32–H395 the chain is Lumenal. The N-linked (GlcNAc...) asparagine glycan is linked to N57. C79 and C121 are disulfide-bonded. Residues P132–R136, F171–R173, V198–D199, Y228, and W260 contribute to the UDP-alpha-D-galactose site. An intrachain disulfide couples C192 to C211. Residue D199 participates in Mn(2+) binding. G262 to D265 is an N-acetyl-D-glucosamine binding site. Position 293 (H293) interacts with Mn(2+). H293–G295 is a binding site for UDP-alpha-D-galactose. R305 provides a ligand contact to N-acetyl-D-glucosamine. N339 and N387 each carry an N-linked (GlcNAc...) asparagine glycan. A disordered region spans residues T341–H395.

Belongs to the glycosyltransferase 7 family. Mn(2+) serves as cofactor.

The protein resides in the golgi apparatus. Its subcellular location is the golgi stack membrane. It carries out the reaction an N-acetyl-beta-D-glucosaminyl derivative + UDP-alpha-D-galactose = a beta-D-galactosyl-(1-&gt;4)-N-acetyl-beta-D-glucosaminyl derivative + UDP + H(+). The enzyme catalyses N-acetyl-D-glucosamine + UDP-alpha-D-galactose = beta-D-galactosyl-(1-&gt;4)-N-acetyl-D-glucosamine + UDP + H(+). The catalysed reaction is a beta-D-GlcNAc-(1-&gt;3)-beta-D-Gal-(1-&gt;4)-beta-D-Glc-(1&lt;-&gt;1)-Cer(d18:1(4E)) + UDP-alpha-D-galactose = a neolactoside nLc4Cer(d18:1(4E)) + UDP + H(+). It catalyses the reaction a beta-D-glucosylceramide + UDP-alpha-D-galactose = a beta-D-galactosyl-(1-&gt;4)-beta-D-glucosyl-(1&lt;-&gt;1)-ceramide + UDP + H(+). It carries out the reaction a neolactoside IV(3)-beta-GlcNAc-nLc4Cer + UDP-alpha-D-galactose = a neolactoside nLc6Cer + UDP + H(+). It participates in protein modification; protein glycosylation. Responsible for the synthesis of complex-type N-linked oligosaccharides in many glycoproteins as well as the carbohydrate moieties of glycolipids. This is Beta-1,4-galactosyltransferase 3 (B4GALT3) from Cricetulus griseus (Chinese hamster).